Reading from the N-terminus, the 233-residue chain is Synaptogyrin-4 (233 aa).

One can recognise an MARVEL domain in the interval 18–169; that stretch reads FLRRPKSISR…QAYLAFQDLR (152 aa). The next 4 membrane-spanning stretches (helical) occupy residues 25–45, 66–86, 104–124, and 145–165; these read ISRIFGGVFSLVIFSSLLTDG, CSFAVGAGFLSFLSCLVFLAI, LLDFILAVLWAGVWFVAFCFL, and AAIALSFFSVPVWILQAYLAF. The disordered stretch occupies residues 191–233; the sequence is SPSSTSPSNPPITGPNSLSYTSSALSPYMTTPKAPRLAMMPDS. A compositionally biased stretch (polar residues) spans 204–219; the sequence is GPNSLSYTSSALSPYM.

It belongs to the synaptogyrin family.

It is found in the membrane. In Mus musculus (Mouse), this protein is Synaptogyrin-4 (Syngr4).